Reading from the N-terminus, the 893-residue chain is Protein translocase subunit SecA (893 aa).

ATP contacts are provided by residues Gln87, 105–109, and Asp512; that span reads GEGKT. Residues 840 to 849 are compositionally biased toward basic and acidic residues; that stretch reads VEEQHRKSEE. Residues 840-893 are disordered; the sequence is VEEQHRKSEEVPMDFQHQSASSPSEQAQTPRVGRNEPCPCGSGKKYKQCHGKLA. Over residues 855–868 the composition is skewed to polar residues; sequence QHQSASSPSEQAQT. Residues Cys877, Cys879, Cys888, and His889 each coordinate Zn(2+). Basic residues predominate over residues 883 to 893; the sequence is KKYKQCHGKLA.

Belongs to the SecA family. As to quaternary structure, monomer and homodimer. Part of the essential Sec protein translocation apparatus which comprises SecA, SecYEG and auxiliary proteins SecDF-YajC and YidC. The cofactor is Zn(2+).

It is found in the cell inner membrane. The protein resides in the cytoplasm. The enzyme catalyses ATP + H2O + cellular proteinSide 1 = ADP + phosphate + cellular proteinSide 2.. Part of the Sec protein translocase complex. Interacts with the SecYEG preprotein conducting channel. Has a central role in coupling the hydrolysis of ATP to the transfer of proteins into and across the cell membrane, serving both as a receptor for the preprotein-SecB complex and as an ATP-driven molecular motor driving the stepwise translocation of polypeptide chains across the membrane. The chain is Protein translocase subunit SecA from Colwellia psychrerythraea (strain 34H / ATCC BAA-681) (Vibrio psychroerythus).